The sequence spans 210 residues: Riboflavin kinase (210 aa).

The interval 1-81 is H-T-H motif-like; it reads MECRERRLAA…DLLRYFNIAS (81 aa). A riboflavin kinase region spans residues 82 to 210; it reads IRLVGRVVSG…GDVVEVEVLL (129 aa). CDP is bound at residue 91–96; that stretch reads GLGEGA. 2 residues coordinate Mg(2+): T120 and N122. 2 residues coordinate FMN: T177 and E185. 190–193 provides a ligand contact to CDP; sequence VKLR.

It belongs to the archaeal riboflavin kinase family. Mg(2+) serves as cofactor.

The catalysed reaction is riboflavin + CTP = CDP + FMN + H(+). Its pathway is cofactor biosynthesis; FMN biosynthesis; FMN from riboflavin (CTP route): step 1/1. Its function is as follows. Catalyzes the CTP-dependent phosphorylation of riboflavin (vitamin B2) to form flavin mononucleotide (FMN). The polypeptide is Riboflavin kinase (ribK) (Pyrobaculum arsenaticum (strain DSM 13514 / JCM 11321 / PZ6)).